The chain runs to 376 residues: MARVEL domain-containing protein 3 (376 aa).

Residues 1–95 are compositionally biased toward basic and acidic residues; sequence MKNTSGHREP…EKSRQSRARP (95 aa). The tract at residues 1-134 is disordered; the sequence is MKNTSGHREP…GRRGLESERA (134 aa). The Cytoplasmic portion of the chain corresponds to 1 to 173; that stretch reads MKNTSGHREP…HKCRYLCTGR (173 aa). The MARVEL domain occupies 168–361; it reads YLCTGRACWQ…GAVLAFRGYR (194 aa). A helical transmembrane segment spans residues 174–194; it reads ACWQMLKALLNLLILACSSVS. Residues 195–247 lie on the Extracellular side of the membrane; that stretch reads YNSTGGYTGITSLGGIYYYQYGGAYSGFDGADGERAQQLDVQFYQLKLPTVTA. A helical transmembrane segment spans residues 248-268; it reads AMAYSGALMTFSCLTLLAGAL. The Cytoplasmic segment spans residues 269–275; it reads RVPWHCP. Residues 276-296 form a helical membrane-spanning segment; that stretch reads LWLVIEGLMDALIAGAYVPGL. Residues 297–335 are Extracellular-facing; it reads YFFFQHLSAAYSSDVCKERETLYQSKGYSGFNCGVHGGD. Residues 336–356 traverse the membrane as a helical segment; it reads IGAGVFAAMAIGVFAVGAVLA. The Cytoplasmic portion of the chain corresponds to 357–376; that stretch reads FRGYRKVKKLKEKPTEMLEF.

Widely expressed with highest levels in small intestine, colon, stomach and lung. Liver expresses only isoform 2.

It localises to the membrane. The protein localises to the cell junction. It is found in the tight junction. As a component of tight junctions, plays a role in paracellular ion conductivity. In Mus musculus (Mouse), this protein is MARVEL domain-containing protein 3 (Marveld3).